A 254-amino-acid polypeptide reads, in one-letter code: Cdc42 effector protein 3 (254 aa).

Positions 31 to 45 constitute a CRIB domain; that stretch reads ISPPLGDFRHTIHIG. Tyrosine 63 carries the phosphotyrosine modification. Phosphoserine is present on residues serine 89, serine 108, and serine 144. The disordered stretch occupies residues 165–205; that stretch reads VHQGDTSWGSSGSGSQSSQGRDSHSSSLSEQSSDWPADDMF. Residues 171-197 are compositionally biased toward low complexity; it reads SWGSSGSGSQSSQGRDSHSSSLSEQSS.

It belongs to the BORG/CEP family. In terms of assembly, interacts with RHOQ and CDC42, in a GTP-dependent manner, and with SEPT7.

The protein localises to the endomembrane system. It is found in the cytoplasm. The protein resides in the cytoskeleton. Probably involved in the organization of the actin cytoskeleton. May act downstream of CDC42 to induce actin filament assembly leading to cell shape changes. Induces pseudopodia formation in fibroblasts. The sequence is that of Cdc42 effector protein 3 (Cdc42ep3) from Mus musculus (Mouse).